The primary structure comprises 609 residues: Replication protein A 70 kDa DNA-binding subunit (609 aa).

A disordered region spans residues 112–164 (IGNPHPYNDGQGPPQPAAPAPASAPPPSKPQNISAPPPPSMNRGASKLFGGGS). Pro residues predominate over residues 124-151 (PPQPAAPAPASAPPPSKPQNISAPPPPS). The segment at residues 189 to 273 (WTVRARVTNK…VKNDYEMTFN (85 aa)) is a DNA-binding region (OB). The C4-type zinc finger occupies 472-494 (CPSQDCNKKVIDQQNGLFRCEKC).

This sequence belongs to the replication factor A protein 1 family. Component of the heterotrimeric canonical replication protein A complex (RPA). Interacts with rpain-a.

The protein localises to the nucleus. Its subcellular location is the PML body. Functionally, as part of the heterotrimeric replication protein A complex (RPA/RP-A), binds and stabilizes single-stranded DNA intermediates, that form during DNA replication or upon DNA stress. It prevents their reannealing and in parallel, recruits and activates different proteins and complexes involved in DNA metabolism. Thereby, it plays an essential role both in DNA replication and the cellular response to DNA damage. The polypeptide is Replication protein A 70 kDa DNA-binding subunit (rpa1) (Xenopus tropicalis (Western clawed frog)).